A 2196-amino-acid polypeptide reads, in one-letter code: MEDGAQMRVVAFGDQTYDCSEAVSQLLRVRDDAIVVDFLERAPAVLKAELARLSSEQQEETPRFATLAELVPRYRAGTLNPAVSQALTCIAQLGLFIRQHSSGQEAYPTAHDSCITGVCTGALTAVAVGSASSVTALVPLALHTVAVAVRLGARAWEIGSCLADARRGANGRYASWTSAVGGISPQDLQDRISAYTAEQALASVSVPYLSAAVGPGQSSVSAAPVILDAFLSTLLRPLTTTRLPITAPYHAPHLFTAKDVQHVTDCLPPSEAWPTVRIPIISFSRDEAVSRGASFPAAMSEAVRDCLIRPIALDRMAVSITNHARDLGKDSVLPSPIALSFSDKLGPQVNSHLPGAKAPTPELTSKSIPSAIGAEQQPMAKSPIAILAASGRFPQSSSMDQFWDVLINGVDTHELVPPTRWNAATHVSEDPKAKNVSGTGFGCWLHEAGEFDAAYFNMSPREAPQVDPAQRLALLTATEALEQAGVVPNRTSSTQKNRVGVWYGATSNDWMETNSAQNVDTYFIPGGNRAFIPGRVNYFHKFSGPSYTIDTACSSSLAALHMACNALWRGEVDTAIVGGTNVLTNPDMTAGLDAGHFLSRSGNCKTFDDEADGYCRGEAVVTLILKRLPDAQADKDPIQASILGIATNHSAEAASITRPHAGAQQDLFQQVLTETGLTANDISVCEMHGTGTQAGDSGETTSVVETLAPLNRSGSAVRTTPLYIGAVKSNVGHAESAAGVSSLAKILLMLKHSKIPPHVGIKTKLNHRLPDLAARNTHIARSEVPWPRPKNGKRRVLLNNFSAAGGNTCLVLEDAPEPEDSQEVDPREHHIVALSAKTPDSMVNNLTNMITWIDKHSGDSLATLPQLSYTTTARRVHHRHRAVATGTDLLQIRSSLQEQLDRRVSGERSIPHPPNGPSFVLAFTGQGSAFAGMGVDLYKRFASFRSDIARYDQICEGMSLPSIKAMFEDEKVFSTASPTLQQLTHVCFQMALYRLWKSLGVQAKAVVGHSLGEYAALYAAGVLSQSDTLYLVGRRAQLMEKHLSQGTHAMLAVRAKEEAIVAAIDGPPGEAYEFSCRNGEQRNVLGGTVAQIQAAKAALEAKKIRCQYLDTPMAFHTGQVDPILPELLQVAAACSIQDPQIPVISPAYGKVIRSAKDFQPEYFTHHCRSSVNMVDALQSAVEEGLLDKNVIGLEIGPGPVVTQFVKEAVGTTMQTFASINKDKDTWQLMTQALAKFYLAGASVEWSRYHEDFPGAQKVLELPAYGWALKNYWLQYVNDWSLRKGDPAVVVAASNLELSSSIHKVITNTITANSDGELVVDADLSREDLHPMVQGHQVYGVPLCTPSVYADIALTLGEYIRQVIKPGEVAQTSVEVAEMNIQSALVANNTGRVQLLRTCAKFDPKAQVASCTFSSIVEQHANCKIRFGSLEKEKTALKSAALAAQASMAALKTQVGQDDNTYRFSKGMIYKMIGQLADFDEKYRGLCAITLDNDAMEASGKVSFKGIPNEGKFHSSPAYLDALSQLGGFVMNANEGVDLEKEVFVNHGWGSMRFFAALDPAMTYYTHVKMTQGKDKLWTGDVLIFDDKQALIGIVGGVALQGVPKRLMHYIVTAANKKASGPPTEKKTSSPPVEKKASAPVAPTRPAIQRKNASIPPPATQVTPQNKTIKTPSVSALIAPALEIVSEEIRMPIDELKDDIDFTDAGLDSLLSLVISSRMRDQLGIEFESAQFMEIGSIGGLKEFLTRLSPPVAVAVATAVEIVKEEALTSLEELTDPSPNEIGTVWRDALKILSEESGLTDEELTDDTSFADVGVDSLMSLVITSRLRDELDIDFPDRALFEECQTIFDLRKRFSGSTESFDSTTTKPSAGDATPPLTDSSASSPPSSEFDGETPMTDLDEVFDSPPAQKRIPSPPKGRIPPAWSMYLQGSQKRSKEILFLFPDGAGAATSYLSLPRLGEDIGVVAFNSPFMKTPHKFADHTLPDVIASYVEGIRGRQAQGPYHLGGWSAGGILAYAVAQELIAAGEEVSTLLLIDSPSPTKGLDRLPTRFFDHCTNVGLFGTELSRGSGGPNKTPEWLMPHFRASIELLHGYHAPPMKLGNKTKVMVIWAGECAFDGVRYAHIPPSAGDTDEDTEGMKFLTEKRKDFGATEWASLFPGTDVDARVVESEHHFSMMRDSGAQMLVEHMRDGLGIVSS.

Residues 11-250 are N-terminal acylcarrier protein transacylase domain (SAT); it reads AFGDQTYDCS…TRLPITAPYH (240 aa). The 434-residue stretch at 381–814 folds into the Ketosynthase family 3 (KS3) domain; that stretch reads KSPIAILAAS…GGNTCLVLED (434 aa). Residues cysteine 553, histidine 688, and histidine 733 each act as for beta-ketoacyl synthase activity in the active site. Positions 922–1223 are malonyl-CoA:ACP transacylase (MAT) domain; the sequence is AFTGQGSAFA…QTFASINKDK (302 aa). The tract at residues 1298–1611 is product template (PT) domain; that stretch reads SSSIHKVITN…VPKRLMHYIV (314 aa). The N-terminal hotdog fold stretch occupies residues 1302–1441; it reads HKVITNTITA…EKTALKSAAL (140 aa). The PKS/mFAS DH domain maps to 1302 to 1608; it reads HKVITNTITA…LQGVPKRLMH (307 aa). Histidine 1335 (proton acceptor; for dehydratase activity) is an active-site residue. The interval 1460–1608 is C-terminal hotdog fold; the sequence is TYRFSKGMIY…LQGVPKRLMH (149 aa). Residue aspartate 1520 is the Proton donor; for dehydratase activity of the active site. Residues 1617–1666 form a disordered region; the sequence is KASGPPTEKKTSSPPVEKKASAPVAPTRPAIQRKNASIPPPATQVTPQNK. Over residues 1623–1636 the composition is skewed to basic and acidic residues; it reads TEKKTSSPPVEKKA. Carrier domains are found at residues 1671–1748 and 1775–1857; these read PSVS…TRLS and DPSP…SGST. Serine 1708 and serine 1816 each carry O-(pantetheine 4'-phosphoryl)serine. Residues 1856–1867 are compositionally biased toward polar residues; the sequence is STESFDSTTTKP. The segment at 1856–1923 is disordered; it reads STESFDSTTT…PPKGRIPPAW (68 aa). The segment covering 1872 to 1887 has biased composition (low complexity); sequence ATPPLTDSSASSPPSS. Residues 1937-2187 form a thioesterase (TE) domain region; it reads ILFLFPDGAG…SGAQMLVEHM (251 aa).

The cofactor is pantetheine 4'-phosphate.

It catalyses the reaction 6 malonyl-CoA + acetyl-CoA + 6 H(+) = nor-toralactone + 6 CO2 + 7 CoA + 2 H2O. It functions in the pathway mycotoxin biosynthesis. Its function is as follows. Polyketide synthase; part of the gene cluster that mediates the biosynthesis of cercosporin, a light-activated, non-host-selective toxin. The perylenequinone chromophore of cercosporin absorbs light energy to attain an electronically-activated triplet state and produces active oxygen species such as the hydroxyl radical, superoxide, hydrogen peroxide or singlet oxygen upon reaction with oxygen molecules. These reactive oxygen species cause damage to various cellular components including lipids, proteins and nucleic acids. The first step of cercosporin biosynthesis is performed by the polyketide synthase CTB1 which catalyzes the formation of nor-toralactone. The starter unit acyltransferase (SAT) domain of CTB1 initiates polyketide extension by the selective utilization of acetyl-CoA, which is elongated to the heptaketide in the beta-ketoacyl synthase (KS) domain by successive condensations with six malonyl units introduced by the malonyl acyltransferase (MAT) domain. The product template (PT) domain catalyzes C4-C9 and C2-C11 aldol cyclizations and dehydrations to a trihydroxynaphthalene, which is thought to be delivered to the thioesterase (TE) domain for product release. The bifunctional enzyme CTB3 then methylates nor-toralactone to toralactone before conducting an unusual oxidative aromatic ring opening. The O-methyltransferase CTB2 further methylates the nascent OH-6 of the CBT3 product, blocking further oxidation at this site before the reductase CTB6 reduces the 2-oxopropyl ketone at position C7, giving naphthalene. The FAD-dependent monooxygenase CTB5 in concert with the multicopper oxidase CTB12 are responsible for homodimerization of naphthalene with CTB7 installing the dioxepine moiety, finally producing cercosporin. The fasciclin domain-containing protein CTB11 might act with CTB5 and CTB12 whereas the roles of CTB9 and CTB10 have still to be elucidated. The protein is Non-reducing polyketide synthase CTB1 of Cercospora nicotianae (Barn spot disease fungus).